The chain runs to 307 residues: Taste receptor type 2 member 10 (307 aa).

Over 1–6 (MLRVVE) the chain is Extracellular. Residues 7–27 (GIFIFVVVSESVFGVLGNGFI) traverse the membrane as a helical segment. Over 28 to 42 (GLVNCIDCAKNKLST) the chain is Cytoplasmic. Residues 43-63 (IGFILTGLAISRIFLIWIIIT) traverse the membrane as a helical segment. Topologically, residues 64-100 (DGFIQIFSPNIYASGNLIEYISYFWVIGNQSSMWFAT) are extracellular. The N-linked (GlcNAc...) asparagine glycan is linked to asparagine 92. The chain crosses the membrane as a helical span at residues 101–121 (SLSIFYFLKIANFSNYIFLWL). At 122–126 (KSRTN) the chain is on the cytoplasmic side. The helical transmembrane segment at 127-147 (MVLPFMIVFLLISSLLNFAYI) threads the bilayer. Topologically, residues 148 to 179 (AKILNDYKTKNDTVWDLNMYKSEYFIKQILLN) are extracellular. A glycan (N-linked (GlcNAc...) asparagine) is linked at asparagine 158. A helical transmembrane segment spans residues 180-200 (LGVIFFFTLSLITCIFLIISL). The Cytoplasmic segment spans residues 201–227 (WRHNRQMQSNVTGLRDSNTEAHVKAMK). The chain crosses the membrane as a helical span at residues 228–248 (VLISFIILFILYFIGMAIEIS). The Extracellular portion of the chain corresponds to 249-257 (CFTVRENKL). Residues 258-278 (LLMFGMTTTAIYPWGHSFILI) traverse the membrane as a helical segment. Over 279–307 (LGNSKLKQASLRVLQQLKCCEKRKNLRVT) the chain is Cytoplasmic.

This sequence belongs to the G-protein coupled receptor T2R family. Expressed in subsets of taste receptor cells of the tongue and palate epithelium and exclusively in gustducin-positive cells.

The protein localises to the membrane. Gustducin-coupled strychnine receptor implicated in the perception of bitter compounds in the oral cavity and the gastrointestinal tract. Signals through PLCB2 and the calcium-regulated cation channel TRPM5. The protein is Taste receptor type 2 member 10 (TAS2R10) of Homo sapiens (Human).